A 418-amino-acid polypeptide reads, in one-letter code: Secreted aspartic protease 5 (418 aa).

Positions 1–18 (MFLKNILSVLAFALLIDA) are cleaved as a signal peptide. Residues 19–76 (APVKRSPGFVTLDFNVKRSLVDPDDPTVEAKRSPLFLEFTPSEFPVDETGRDGDVDKR) constitute a propeptide, activation peptide. The region spanning 90–404 (YTADITVGSD…NLDDKKISMA (315 aa)) is the Peptidase A1 domain. Asp-108 is an active-site residue. A pepstatin A-binding site is contributed by 108–110 (DTG). Cys-123 and Cys-135 are oxidised to a cystine. 161 to 162 (GD) is a binding site for pepstatin A. Glu-268 contributes to the Zn(2+) binding site. The active site involves Asp-294. A pepstatin A-binding site is contributed by 294–298 (DSGTT). Cys-332 and Cys-370 are disulfide-bonded.

The protein belongs to the peptidase A1 family.

It is found in the secreted. It carries out the reaction Preferential cleavage at the carboxyl of hydrophobic amino acids, but fails to cleave 15-Leu-|-Tyr-16, 16-Tyr-|-Leu-17 and 24-Phe-|-Phe-25 of insulin B chain. Activates trypsinogen, and degrades keratin.. Its activity is regulated as follows. Inhibited by pepstatin A analogs. Functionally, secreted aspartic peptidases (SAPs) are a group of ten acidic hydrolases considered as key virulence factors. These enzymes supply the fungus with nutrient amino acids as well as are able to degrade the selected host's proteins involved in the immune defense. Moreover, acts toward human hemoglobin though limited proteolysis to generate a variety of antimicrobial hemocidins, enabling to compete with the other microorganisms of the same physiological niche using the microbicidal peptides generated from the host protein. This is Secreted aspartic protease 5 from Candida albicans (strain SC5314 / ATCC MYA-2876) (Yeast).